We begin with the raw amino-acid sequence, 151 residues long: Pseudo histidine-containing phosphotransfer protein 2 (151 aa).

The region spanning 38–133 (SPNFVEEVAA…ATLKQKLESY (96 aa)) is the HPt domain.

Functions as a two-component phosphorelay mediator between cytokinin sensor histidine kinases and response regulators (B-type ARRs). Plays an important role in propagating cytokinin signal transduction. The protein is Pseudo histidine-containing phosphotransfer protein 2 of Oryza sativa subsp. japonica (Rice).